Here is a 209-residue protein sequence, read N- to C-terminus: Redox-sensing transcriptional repressor Rex (209 aa).

Residues 16–55 (LYYRFIQNLSLSGKQRVSSAELSEAVKVDSATIRRDFSYF) constitute a DNA-binding region (H-T-H motif). Position 90-95 (90-95 (GVGNLG)) interacts with NAD(+).

Belongs to the transcriptional regulatory Rex family. In terms of assembly, homodimer.

The protein localises to the cytoplasm. Modulates transcription in response to changes in cellular NADH/NAD(+) redox state. The protein is Redox-sensing transcriptional repressor Rex of Bacillus anthracis (strain A0248).